Consider the following 181-residue polypeptide: ADP-ribosylation factor 1 (181 aa).

A lipid anchor (N-myristoyl glycine) is attached at G2. GTP is bound by residues 24–31, 67–71, and 126–129; these read GLDAAGKT, DVGGQ, and NKQD.

Belongs to the small GTPase superfamily. Arf family. In terms of assembly, interacts with AGD7 and GDAP1. GDP-locked form interacts with cytosolic tail of p24 proteins. Interacts with AGD5 at trans-Golgi network. Interacts with A.tumefaciens AK6b.

The protein resides in the golgi apparatus. The protein localises to the endosome. It localises to the trans-Golgi network. Its subcellular location is the early endosome. It carries out the reaction GTP + H2O = GDP + phosphate + H(+). Its activity is regulated as follows. Activated by AGD7 and AGD10. Its function is as follows. GTP-binding protein involved in protein trafficking; required for the sequence-specific vacuolar sorting route to the lytic vacuole, for the ER-to-Golgi transport and for the Golgi-derived transport to the plasma membrane. Involved in the recruitment of COPI and GDAP1 to membranes. Required for recycling of PIN auxin transporters (e.g. PIN1 and PIN2) in a fungal toxin brefeldin A (BFA)-dependent manner. Involved in various auxin-dependent developmental processes. This chain is ADP-ribosylation factor 1, found in Arabidopsis thaliana (Mouse-ear cress).